Reading from the N-terminus, the 466-residue chain is L-seryl-tRNA(Sec) selenium transferase (466 aa).

Position 292 is an N6-(pyridoxal phosphate)lysine (lysine 292).

Belongs to the SelA family. Pyridoxal 5'-phosphate is required as a cofactor.

Its subcellular location is the cytoplasm. It catalyses the reaction L-seryl-tRNA(Sec) + selenophosphate + H(+) = L-selenocysteinyl-tRNA(Sec) + phosphate. Its pathway is aminoacyl-tRNA biosynthesis; selenocysteinyl-tRNA(Sec) biosynthesis; selenocysteinyl-tRNA(Sec) from L-seryl-tRNA(Sec) (bacterial route): step 1/1. Converts seryl-tRNA(Sec) to selenocysteinyl-tRNA(Sec) required for selenoprotein biosynthesis. The protein is L-seryl-tRNA(Sec) selenium transferase of Rhizobium meliloti (strain 1021) (Ensifer meliloti).